Consider the following 353-residue polypeptide: uncharacterized protein (353 aa).

The signal sequence occupies residues 1–28 (MHLTIMRRFAVLLLLAIFLGGCSGSNGA).

This is an uncharacterized protein from Archaeoglobus fulgidus (strain ATCC 49558 / DSM 4304 / JCM 9628 / NBRC 100126 / VC-16).